Consider the following 100-residue polypeptide: MARKSLIQRERKRQKLEQKYHLIRRSSKKEISKVSSLSDKWEIHGKLQSPPRNSAPTRLHRRCFSTGRPRANYRDFGLSGHILRERVHACLLPGATRSSW.

This sequence belongs to the universal ribosomal protein uS14 family. Part of the 30S ribosomal subunit.

It is found in the plastid. It localises to the chloroplast. Binds 16S rRNA, required for the assembly of 30S particles. This chain is Small ribosomal subunit protein uS14c, found in Liriodendron tulipifera (Tuliptree).